The primary structure comprises 60 residues: Large ribosomal subunit protein uL30 (60 aa).

The protein belongs to the universal ribosomal protein uL30 family. Part of the 50S ribosomal subunit.

The polypeptide is Large ribosomal subunit protein uL30 (Bacillus mycoides (strain KBAB4) (Bacillus weihenstephanensis)).